The primary structure comprises 317 residues: HTH-type transcriptional repressor PA14_22550 (317 aa).

The region spanning 1–59 (MDKLTAMATFVKVVDAGSFTRAADALGLPKARVSQRVSDLEKHLGVRLLNRTTRALSLT) is the HTH lysR-type domain. Residues 19 to 38 (FTRAADALGLPKARVSQRVS) constitute a DNA-binding region (H-T-H motif).

It belongs to the LysR transcriptional regulatory family.

Functionally, represses the transcription of the operon that consists of PA14_22510 to PA14_22540. This Pseudomonas aeruginosa (strain UCBPP-PA14) protein is HTH-type transcriptional repressor PA14_22550.